Here is a 608-residue protein sequence, read N- to C-terminus: Cytoplasmic dynein 1 intermediate chain 1 (608 aa).

Basic and acidic residues-rich tracts occupy residues 1 to 13 (MSDKSDLKAELER) and 20 to 60 (QIRE…RETE). Positions 1 to 106 (MSDKSDLKAE…SGDLGPLTRR (106 aa)) are disordered. N-acetylserine is present on Ser-2. A Phosphoserine modification is found at Ser-50. Pro residues predominate over residues 70-79 (PEPPLVPTPM). Residues 80–90 (SPSSKSVSTPS) are compositionally biased toward low complexity. Ser-83 carries the phosphoserine modification. Thr-88 carries the phosphothreonine modification. A phosphoserine mark is found at Ser-90, Ser-94, and Ser-97. Residues 110–126 (KLGVSKITQVDFLPREV) form an interaction with DYNLT1 region. The tract at residues 132 to 184 (ETQTPLATHQSEEDEDDEEMVEPKGDQDSEQENEDKKQEVKEAPPRELTEEEK) is disordered. Thr-139 carries the post-translational modification Phosphothreonine. A phosphoserine mark is found at Ser-142 and Ser-160. A compositionally biased stretch (basic and acidic residues) spans 165–184 (EDKKQEVKEAPPRELTEEEK). WD repeat units lie at residues 248-297 (SKHR…TTPE), 301-341 (HCQS…RTPV), 350-391 (AHTH…TPQE), 400-440 (SKPV…AGIG), 445-490 (GHQG…PLYS), 493-533 (DNAD…EVPT), and 539-578 (EGASALNRVRWAQGGKEVAVGDSEGRIWIYDVGELAVPHN). Ser-598 is modified (phosphoserine).

It belongs to the dynein intermediate chain family. As to quaternary structure, homodimer. The cytoplasmic dynein 1 complex consists of two catalytic heavy chains (HCs) and a number of non-catalytic subunits presented by intermediate chains (ICs), light intermediate chains (LICs) and light chains (LCs); the composition seems to vary in respect to the IC, LIC and LC composition. The heavy chain homodimer serves as a scaffold for the probable homodimeric assembly of the respective non-catalytic subunits. The ICs and LICs bind directly to the HC dimer and the LCs assemble on the IC dimer. Interacts with DYNC1H1. Interacts with DYNLT1 and DYNLT3. Interacts with DCTN1. Interacts with MCRS1; the interaction is required for the proper distribution of centriolar satellites.

The protein localises to the cytoplasm. It localises to the chromosome. The protein resides in the centromere. It is found in the kinetochore. Its subcellular location is the cytoskeleton. The protein localises to the spindle pole. Its function is as follows. Acts as one of several non-catalytic accessory components of the cytoplasmic dynein 1 complex that are thought to be involved in linking dynein to cargos and to adapter proteins that regulate dynein function. Cytoplasmic dynein 1 acts as a motor for the intracellular retrograde motility of vesicles and organelles along microtubules. The intermediate chains mediate the binding of dynein to dynactin via its 150 kDa component (p150-glued) DCTN1. May play a role in mediating the interaction of cytoplasmic dynein with membranous organelles and kinetochores. The polypeptide is Cytoplasmic dynein 1 intermediate chain 1 (DYNC1I1) (Bos taurus (Bovine)).